The chain runs to 210 residues: Prolactin (210 aa).

A signal peptide spans 1–23 (MARRSQGTKLHLAVLCLVVSCHA). 2 disulfides stabilise this stretch: C69–C183 and C200–C210.

This sequence belongs to the somatotropin/prolactin family. Pituitary gland.

The protein localises to the secreted. The chain is Prolactin (prl) from Coregonus autumnalis (Arctic cisco).